The following is a 351-amino-acid chain: Phospho-N-acetylmuramoyl-pentapeptide-transferase (351 aa).

10 helical membrane-spanning segments follow: residues 17–37, 63–83, 85–105, 124–144, 158–178, 190–210, 230–250, 254–274, 279–299, and 328–348; these read TAYATIFAFLLALIFGPFIIL, IPTMGGILIFFCVLVSLFFWI, FWNIYFLIILFVMVSFACLGF, FKIYGQILFSCISVTMLYYFG, SLKLDLGVLYIPFGMFILISA, GLAIGLSIVVTGALVIIAYLA, LVVFLGALLGGSFGFLWFNAY, IMMGDTGSLSIGAVLGMTALI, ILFAILAGVFVVETLSVIIQV, and QVVIRFWIIGLIFAIIALSTL.

This sequence belongs to the glycosyltransferase 4 family. MraY subfamily. Mg(2+) is required as a cofactor.

It localises to the cell inner membrane. The enzyme catalyses UDP-N-acetyl-alpha-D-muramoyl-L-alanyl-gamma-D-glutamyl-meso-2,6-diaminopimeloyl-D-alanyl-D-alanine + di-trans,octa-cis-undecaprenyl phosphate = di-trans,octa-cis-undecaprenyl diphospho-N-acetyl-alpha-D-muramoyl-L-alanyl-D-glutamyl-meso-2,6-diaminopimeloyl-D-alanyl-D-alanine + UMP. It participates in cell wall biogenesis; peptidoglycan biosynthesis. Its function is as follows. Catalyzes the initial step of the lipid cycle reactions in the biosynthesis of the cell wall peptidoglycan: transfers peptidoglycan precursor phospho-MurNAc-pentapeptide from UDP-MurNAc-pentapeptide onto the lipid carrier undecaprenyl phosphate, yielding undecaprenyl-pyrophosphoryl-MurNAc-pentapeptide, known as lipid I. The polypeptide is Phospho-N-acetylmuramoyl-pentapeptide-transferase (Borrelia turicatae (strain 91E135)).